A 491-amino-acid chain; its full sequence is Zinc finger and SCAN domain-containing protein 22 (491 aa).

Phosphoserine is present on S9. The region spanning 49-131 (RLRFRHFRYE…VLVEDLTQVL (83 aa)) is the SCAN box domain. Disordered regions lie at residues 134-161 (RGWD…SNVT) and 204-249 (FKKT…DKFD). The span at 214–224 (VPTDQRGRESG) shows a compositional bias: basic and acidic residues. A compositionally biased stretch (polar residues) spans 225–241 (ASRNSSSAWPNLTSQEK). 8 consecutive C2H2-type zinc fingers follow at residues 268–290 (SKCR…QKTH), 296–318 (YACS…QVVH), 324–346 (HECK…QRIH), 352–374 (YKCG…QRVH), 380–402 (YECD…QRIH), 408–430 (YKCD…LRIH), 436–458 (YQCK…QRIH), and 464–486 (YKCS…LRIH). K443 participates in a covalent cross-link: Glycyl lysine isopeptide (Lys-Gly) (interchain with G-Cter in SUMO2).

This sequence belongs to the krueppel C2H2-type zinc-finger protein family.

It is found in the nucleus. May be involved in transcriptional regulation. This chain is Zinc finger and SCAN domain-containing protein 22 (ZSCAN22), found in Homo sapiens (Human).